A 969-amino-acid chain; its full sequence is Integrator complex subunit 4 (969 aa).

8 HEAT repeats span residues 68 to 107 (AESV…TAGF), 147 to 185 (VSHR…VEAS), 192 to 230 (NAVA…RGLK), 231 to 265 (LQQA…SQLY), 279 to 315 (IRLV…LQVS), 371 to 407 (NLID…ARSS), 408 to 446 (APFA…NITL), and 448 to 486 (EDQL…CIQL). Residues 928 to 949 (RASNSTWGESTETVPSTESSTE) are compositionally biased toward low complexity. Positions 928 to 950 (RASNSTWGESTETVPSTESSTEG) are disordered.

Belongs to the Integrator subunit 4 family. In terms of assembly, component of the Integrator complex, composed of core subunits INTS1, INTS2, INTS3, INTS4, INTS5, INTS6, INTS7, INTS8, INTS9/RC74, INTS10, INTS11/CPSF3L, INTS12, INTS13, INTS14 and INTS15. The core complex associates with protein phosphatase 2A subunits PPP2CA and PPP2R1A, to form the Integrator-PP2A (INTAC) complex. INTS4 is part of the RNA endonuclease subcomplex, composed of INTS4, INTS9, INTS11 and inositol hexakisphosphate (InsP6).

The protein localises to the nucleus. The protein resides in the cytoplasm. Its function is as follows. Component of the integrator complex, a multiprotein complex that terminates RNA polymerase II (Pol II) transcription in the promoter-proximal region of genes. The integrator complex provides a quality checkpoint during transcription elongation by driving premature transcription termination of transcripts that are unfavorably configured for transcriptional elongation: the complex terminates transcription by (1) catalyzing dephosphorylation of the C-terminal domain (CTD) of Pol II subunit POLR2A/RPB1 and SUPT5H/SPT5, (2) degrading the exiting nascent RNA transcript via endonuclease activity and (3) promoting the release of Pol II from bound DNA. The integrator complex is also involved in terminating the synthesis of non-coding Pol II transcripts, such as enhancer RNAs (eRNAs), small nuclear RNAs (snRNAs), telomerase RNAs and long non-coding RNAs (lncRNAs). This Xenopus laevis (African clawed frog) protein is Integrator complex subunit 4 (ints4).